A 59-amino-acid polypeptide reads, in one-letter code: Large ribosomal subunit protein uL30 (59 aa).

Belongs to the universal ribosomal protein uL30 family. In terms of assembly, part of the 50S ribosomal subunit.

The sequence is that of Large ribosomal subunit protein uL30 from Macrococcus caseolyticus (strain JCSC5402) (Macrococcoides caseolyticum).